The sequence spans 445 residues: MGIIVLKNEGLNFHARISTPLSEIDDDIQKELLDLTKKVKVAGFRAGKVPVSIVKKKYGTSVRHDIIEKRINNLVNHIIKEYNLNIIGRPKIEELQNEPDKDLEFTVKIELLPKITIPDLKKISLDRPKLAVNSQDVEIQLEKLAALTKCYTKESKTKIKDGDQVTIDAIGYIKDRAFDGGKLNDFKVVIGSNTLIQGFEQQLIGSKTGNEVDVNVTFPENYHDKNLSGKDAHFVVQIKAVHTAEPTIIDEEFAKKFQSNSLEELRTHFAKQIENESEEAINTIMKMNLFDKLEKLLDFDVPESLLEQEKNILKSETDKNKHDGSLLNGKSSKEITEYYNKLALRRVRIGLLLAEYAKFKNLQLEPDDFKKIIMQQARNFPGQENMIFDFYKNNPRAIEGLKGPALEDKTVQYIFNNEIQLKEKRYTKEELEKYLETEEQRISLI.

A PPIase FKBP-type domain is found at 162-247 (GDQVTIDAIG…IKAVHTAEPT (86 aa)).

It belongs to the FKBP-type PPIase family. Tig subfamily.

It localises to the cytoplasm. It carries out the reaction [protein]-peptidylproline (omega=180) = [protein]-peptidylproline (omega=0). In terms of biological role, involved in protein export. Acts as a chaperone by maintaining the newly synthesized protein in an open conformation. Functions as a peptidyl-prolyl cis-trans isomerase. This Rickettsia prowazekii (strain Madrid E) protein is Trigger factor (tig).